A 354-amino-acid chain; its full sequence is Galactoside alpha-(1,2)-fucosyltransferase 2 (354 aa).

The Cytoplasmic segment spans residues 1 to 22 (MRFAPDYVLCPPTATRRLRATH). The helical; Signal-anchor for type II membrane protein transmembrane segment at 23-43 (PSVSTIYFLFTIFVVSTVFHC) threads the bilayer. The Lumenal segment spans residues 44–354 (HQRLALVPAP…NMGRALWSGL (311 aa)). N-linked (GlcNAc...) asparagine glycosylation is found at Asn197, Asn291, and Asn317.

Belongs to the glycosyltransferase 11 family. As to expression, salivary and lactating mammary glands.

It localises to the golgi apparatus. It is found in the golgi stack membrane. It carries out the reaction a beta-D-galactosyl-(1-&gt;3)-N-acetyl-beta-D-glucosaminyl derivative + GDP-beta-L-fucose = an alpha-L-Fuc-(1-&gt;2)-beta-D-Gal-(1-&gt;3)-beta-D-GlcNAc derivative + GDP + H(+). The enzyme catalyses a beta-D-galactosyl-(1-&gt;4)-N-acetyl-beta-D-glucosaminyl derivative + GDP-beta-L-fucose = an alpha-L-Fuc-(1-&gt;2)-beta-D-Gal-(1-&gt;4)-beta-D-GlcNAc derivative + GDP + H(+). It catalyses the reaction a neolactoside nLc4Cer + GDP-beta-L-fucose = a neolactoside IV(2)-alpha-Fuc-nLc4Cer + GDP + H(+). The catalysed reaction is a neolactoside nLc4Cer(d18:1(4E)) + GDP-beta-L-fucose = a neolactoside IV(2)-alpha-Fuc-nLc4Cer(d18:1(4E)) + GDP + H(+). It carries out the reaction a ganglioside GM1 + GDP-beta-L-fucose = a ganglioside Fuc-GM1 + GDP + H(+). The enzyme catalyses a ganglioside GA1 + GDP-beta-L-fucose = a ganglioside Fuc-GA1 + GDP + H(+). It catalyses the reaction Lc4Cer + GDP-beta-L-fucose = alpha-L-fucosyl-(1-&gt;2)-beta-D-galactosyl-(1-&gt;3)-N-acetyl-beta-D-glucosaminyl-(1-&gt;3)-beta-D-galactosyl-(1-&gt;4)-beta-D-glucosyl-(1&lt;-&gt;1')-ceramide + GDP + H(+). The catalysed reaction is a beta-D-Gal-(1-&gt;3)-beta-D-GlcNAc-(1-&gt;3)-beta-D-Gal-(1-&gt;4)-beta-D-Glc-(1&lt;-&gt;1')-Cer(d18:1(4E)) + GDP-beta-L-fucose = alpha-L-fucosyl-(1-&gt;2)- beta-D-galactosyl-(1-&gt;3)-N-acetyl-beta-D-glucosaminyl-(1-&gt;3)-beta-D-galactosyl-(1-&gt;4)-beta-D-glucosyl-(1&lt;-&gt;1')-N-acylsphing-4-enine + GDP + H(+). It carries out the reaction a ganglioside GD1b + GDP-beta-L-fucose = a ganglioside Fuc-GD1b + GDP + H(+). The enzyme catalyses a ganglioside GM1 (d18:1(4E)) + GDP-beta-L-fucose = a ganglioside Fuc-GM1 (d18:1(4E)) + GDP + H(+). It catalyses the reaction a globoside GalGb4Cer (d18:1(4E)) + GDP-beta-L-fucose = a globoside Globo-H (d18:1(4E)) + GDP + H(+). The catalysed reaction is a lactoside III(4)-a-Fuc-Lc4Cer + GDP-beta-L-fucose = a lactoside IV(2),III(4)-a-[Fuc]2-Lc4Cer + GDP + H(+). It carries out the reaction beta-D-galactosyl-(1-&gt;3)-N-acetyl-D-galactosamine + GDP-beta-L-fucose = alpha-L-fucosyl-(1-&gt;2)-beta-D-galactosyl-(1-&gt;3)-N-acetyl-D-galactosamine + GDP + H(+). Its pathway is protein modification; protein glycosylation. In terms of biological role, catalyzes the transfer of L-fucose, from a guanosine diphosphate-beta-L-fucose, to the terminal galactose on both O- and N-linked glycans chains of cell surface glycoproteins and glycolipids and the resulting epitope regulates several processes such as cell-cell interaction including host-microbe interaction, cell surface expression and cell proliferation. Preferentially fucosylates gangliosides GA1 and GM1 in the antrum, cecum and colon and in the female reproductive organs. Fucosylated host glycoproteins or glycolipids mediate interaction with intestinal microbiota influencing its composition. Creates a soluble precursor oligosaccharide FuC-alpha ((1,2)Galbeta-) called the H antigen which is an essential substrate for the final step in the soluble ABO blood group antigen synthesis pathway. This chain is Galactoside alpha-(1,2)-fucosyltransferase 2, found in Oryctolagus cuniculus (Rabbit).